The primary structure comprises 436 residues: Ribulose bisphosphate carboxylase large chain (436 aa).

Substrate contacts are provided by Asn104 and Thr154. Lys156 serves as the catalytic Proton acceptor. Residue Lys158 participates in substrate binding. Positions 182, 184, and 185 each coordinate Mg(2+). Residue Lys182 is modified to N6-carboxylysine. Catalysis depends on His275, which acts as the Proton acceptor. Substrate is bound by residues Arg276, His308, and Ser360.

This sequence belongs to the RuBisCO large chain family. Type I subfamily. In terms of assembly, heterohexadecamer of 8 large chains and 8 small chains. Mg(2+) serves as cofactor.

It is found in the plastid. The protein resides in the chloroplast. It catalyses the reaction 2 (2R)-3-phosphoglycerate + 2 H(+) = D-ribulose 1,5-bisphosphate + CO2 + H2O. It carries out the reaction D-ribulose 1,5-bisphosphate + O2 = 2-phosphoglycolate + (2R)-3-phosphoglycerate + 2 H(+). Its function is as follows. RuBisCO catalyzes two reactions: the carboxylation of D-ribulose 1,5-bisphosphate, the primary event in carbon dioxide fixation, as well as the oxidative fragmentation of the pentose substrate in the photorespiration process. Both reactions occur simultaneously and in competition at the same active site. In Euglena viridis (Cercaria viridis), this protein is Ribulose bisphosphate carboxylase large chain.